Consider the following 313-residue polypeptide: Methionyl-tRNA formyltransferase (313 aa).

113-116 (SLLP) is a binding site for (6S)-5,6,7,8-tetrahydrofolate.

Belongs to the Fmt family.

It carries out the reaction L-methionyl-tRNA(fMet) + (6R)-10-formyltetrahydrofolate = N-formyl-L-methionyl-tRNA(fMet) + (6S)-5,6,7,8-tetrahydrofolate + H(+). Its function is as follows. Attaches a formyl group to the free amino group of methionyl-tRNA(fMet). The formyl group appears to play a dual role in the initiator identity of N-formylmethionyl-tRNA by promoting its recognition by IF2 and preventing the misappropriation of this tRNA by the elongation apparatus. This chain is Methionyl-tRNA formyltransferase, found in Francisella tularensis subsp. mediasiatica (strain FSC147).